Here is a 123-residue protein sequence, read N- to C-terminus: Small ribosomal subunit protein uS12 (123 aa).

A 3-methylthioaspartic acid modification is found at aspartate 89. The disordered stretch occupies residues 102-123; that stretch reads LDTQGVKDRKQGRSKYGAKRPK. A compositionally biased stretch (basic residues) spans 113–123; the sequence is GRSKYGAKRPK.

The protein belongs to the universal ribosomal protein uS12 family. As to quaternary structure, part of the 30S ribosomal subunit. Contacts proteins S8 and S17. May interact with IF1 in the 30S initiation complex.

In terms of biological role, with S4 and S5 plays an important role in translational accuracy. Its function is as follows. Interacts with and stabilizes bases of the 16S rRNA that are involved in tRNA selection in the A site and with the mRNA backbone. Located at the interface of the 30S and 50S subunits, it traverses the body of the 30S subunit contacting proteins on the other side and probably holding the rRNA structure together. The combined cluster of proteins S8, S12 and S17 appears to hold together the shoulder and platform of the 30S subunit. This is Small ribosomal subunit protein uS12 from Magnetococcus marinus (strain ATCC BAA-1437 / JCM 17883 / MC-1).